The following is a 468-amino-acid chain: Chromosomal replication initiator protein DnaA (468 aa).

Positions 1-84 are domain I, interacts with DnaA modulators; it reads MSSSLWLQCM…RFEVGSRPVA (84 aa). Residues 81-113 form a disordered region; it reads RPVAAPKPAPTRTPADVAAESSAPAQLQARKPV. The segment at 84–131 is domain II; sequence AAPKPAPTRTPADVAAESSAPAQLQARKPVHKTWDDDAQAIADINHRS. The interval 132–348 is domain III, AAA+ region; sequence NVNPKHKFNN…GALNRVIANA (217 aa). Gly176, Gly178, Lys179, and Thr180 together coordinate ATP. Positions 349–468 are domain IV, binds dsDNA; it reads NFTGRPITID…YSNLIRTLSS (120 aa).

The protein belongs to the DnaA family. Oligomerizes as a right-handed, spiral filament on DNA at oriC.

Its subcellular location is the cytoplasm. Functionally, plays an essential role in the initiation and regulation of chromosomal replication. ATP-DnaA binds to the origin of replication (oriC) to initiate formation of the DNA replication initiation complex once per cell cycle. Binds the DnaA box (a 9 base pair repeat at the origin) and separates the double-stranded (ds)DNA. Forms a right-handed helical filament on oriC DNA; dsDNA binds to the exterior of the filament while single-stranded (ss)DNA is stabiized in the filament's interior. The ATP-DnaA-oriC complex binds and stabilizes one strand of the AT-rich DNA unwinding element (DUE), permitting loading of DNA polymerase. After initiation quickly degrades to an ADP-DnaA complex that is not apt for DNA replication. Binds acidic phospholipids. This chain is Chromosomal replication initiator protein DnaA, found in Vibrio vulnificus (strain CMCP6).